Here is a 318-residue protein sequence, read N- to C-terminus: Fibronectin type III domain-containing protein 11 (318 aa).

Residues 210-307 form the Fibronectin type-III domain; the sequence is VVFDRKASAA…DSLTLHTKPE (98 aa).

The protein is Fibronectin type III domain-containing protein 11 (FNDC11) of Homo sapiens (Human).